The sequence spans 505 residues: ATP synthase subunit alpha (505 aa).

ATP is bound at residue 171–178; that stretch reads GDRQTGKT.

It belongs to the ATPase alpha/beta chains family. In terms of assembly, F-type ATPases have 2 components, CF(1) - the catalytic core - and CF(0) - the membrane proton channel. CF(1) has five subunits: alpha(3), beta(3), gamma(1), delta(1), epsilon(1). CF(0) has three main subunits: a(1), b(2) and c(9-12). The alpha and beta chains form an alternating ring which encloses part of the gamma chain. CF(1) is attached to CF(0) by a central stalk formed by the gamma and epsilon chains, while a peripheral stalk is formed by the delta and b chains.

It is found in the cell inner membrane. The catalysed reaction is ATP + H2O + 4 H(+)(in) = ADP + phosphate + 5 H(+)(out). Functionally, produces ATP from ADP in the presence of a proton gradient across the membrane. The alpha chain is a regulatory subunit. This is ATP synthase subunit alpha from Campylobacter hominis (strain ATCC BAA-381 / DSM 21671 / CCUG 45161 / LMG 19568 / NCTC 13146 / CH001A).